Here is a 232-residue protein sequence, read N- to C-terminus: Small ribosomal subunit protein uS3 (232 aa).

In terms of domain architecture, KH type-2 spans 39–107; it reads VRQFLTKELA…PAQINIAEVR (69 aa).

Belongs to the universal ribosomal protein uS3 family. In terms of assembly, part of the 30S ribosomal subunit. Forms a tight complex with proteins S10 and S14.

Functionally, binds the lower part of the 30S subunit head. Binds mRNA in the 70S ribosome, positioning it for translation. The polypeptide is Small ribosomal subunit protein uS3 (Yersinia pseudotuberculosis serotype O:1b (strain IP 31758)).